Consider the following 350-residue polypeptide: MLEQLQTLKNEAETQINEASDLKSLNDLRVKYLGKKGPMTEIMKQMGKLSAEERPKMGSLANEVRTALTEAISSKQQILETEAINEKLKSETIDVTLPGTAPSIGTKHLLTQVIEEMEDMFIGMGYEIAEGPEVELDYYNFEALNLPKDHPARDMQDSFYITENTLLRTQTSPVQARTMEKHDFSKGPIKVICPGKVYRRDNDDATHSHQFTQIEGLVVGENITFADLKGTLTVLAKTMFGEEREIRLRPSFFPFTEPSVEMDISCFKCGGKGCRVCKGTGWIEILGSGMVHPNVLEMSGIDSTRYSGFAFGLGPERVAMLKYAVDDIRHLYTNDLRFTKQFQSTETGEI.

A Mg(2+)-binding site is contributed by E257.

This sequence belongs to the class-II aminoacyl-tRNA synthetase family. Phe-tRNA synthetase alpha subunit type 1 subfamily. As to quaternary structure, tetramer of two alpha and two beta subunits. It depends on Mg(2+) as a cofactor.

The protein resides in the cytoplasm. The enzyme catalyses tRNA(Phe) + L-phenylalanine + ATP = L-phenylalanyl-tRNA(Phe) + AMP + diphosphate + H(+). The polypeptide is Phenylalanine--tRNA ligase alpha subunit (Listeria monocytogenes serotype 4a (strain HCC23)).